Here is a 221-residue protein sequence, read N- to C-terminus: Histone H1.3 (221 aa).

A compositionally biased stretch (low complexity) spans Met-1–Lys-17. Residues Met-1–Ser-42 are disordered. Ser-2 carries the N-acetylserine modification. The residue at position 2 (Ser-2) is a Phosphoserine. Lys-17 is subject to N6-acetyllysine. Phosphothreonine is present on Thr-18. The segment covering Val-20–Ala-36 has biased composition (basic residues). Residues Lys-33, Lys-35, and Lys-53 each carry the N6-(beta-hydroxybutyryl)lysine modification. Positions Ser-37–Lys-110 constitute an H15 domain. Arg-55 is modified (citrulline). Residues Lys-65, Lys-86, and Lys-91 each carry the N6-(beta-hydroxybutyryl)lysine modification. The disordered stretch occupies residues Gly-92–Lys-221. Ser-105 carries the phosphoserine; by PKC modification. Residues Lys-107 and Lys-141 each carry the N6-(beta-hydroxybutyryl)lysine modification. 4 stretches are compositionally biased toward basic residues: residues Lys-120–Lys-141, Lys-150–Lys-161, Lys-170–Ala-187, and Lys-194–Lys-221.

Belongs to the histone H1/H5 family. H1 histones are progressively phosphorylated during the cell cycle, becoming maximally phosphorylated during late G2 phase and M phase, and being dephosphorylated sharply thereafter. In terms of processing, hydroxybutyrylation of histones is induced by starvation. Post-translationally, citrullination at Arg-55 (H1R54ci) by PADI4 takes place within the DNA-binding site of H1 and results in its displacement from chromatin and global chromatin decondensation, thereby promoting pluripotency and stem cell maintenance.

Its subcellular location is the nucleus. It is found in the chromosome. Functionally, histone H1 protein binds to linker DNA between nucleosomes forming the macromolecular structure known as the chromatin fiber. Histones H1 are necessary for the condensation of nucleosome chains into higher-order structured fibers. Also acts as a regulator of individual gene transcription through chromatin remodeling, nucleosome spacing and DNA methylation. This is Histone H1.3 from Mus musculus (Mouse).